Here is a 120-residue protein sequence, read N- to C-terminus: NAD(P)H-quinone oxidoreductase subunit 3, chloroplastic (120 aa).

3 helical membrane passes run 9-29, 64-84, and 88-108; these read IFWAFLIISSLIPILVFFISG, MFALVFVVFDVETVFLYPWAM, and VLGVSVFVEALIFVLILIVGL.

Belongs to the complex I subunit 3 family. As to quaternary structure, NDH is composed of at least 16 different subunits, 5 of which are encoded in the nucleus.

Its subcellular location is the plastid. The protein resides in the chloroplast thylakoid membrane. The enzyme catalyses a plastoquinone + NADH + (n+1) H(+)(in) = a plastoquinol + NAD(+) + n H(+)(out). It carries out the reaction a plastoquinone + NADPH + (n+1) H(+)(in) = a plastoquinol + NADP(+) + n H(+)(out). NDH shuttles electrons from NAD(P)H:plastoquinone, via FMN and iron-sulfur (Fe-S) centers, to quinones in the photosynthetic chain and possibly in a chloroplast respiratory chain. The immediate electron acceptor for the enzyme in this species is believed to be plastoquinone. Couples the redox reaction to proton translocation, and thus conserves the redox energy in a proton gradient. The chain is NAD(P)H-quinone oxidoreductase subunit 3, chloroplastic from Guizotia abyssinica (Niger).